Consider the following 184-residue polypeptide: Calmodulin-related protein (184 aa).

4 EF-hand domains span residues 8 to 43 (DQIS…LGQN), 44 to 79 (PTEA…KMKD), 81 to 116 (DSEE…LGEK), and 117 to 152 (LTDE…NRRR). Ca(2+)-binding residues include D21, D23, D25, C27, E32, D57, D59, N61, T63, E68, D94, D96, N98, and E105. K116 carries the post-translational modification N6,N6,N6-trimethyllysine. 5 residues coordinate Ca(2+): D130, D132, D134, Q136, and E141. Residues 156 to 184 (EESKRSVNSNISRSNNGRKVRKRDRCTIL) are disordered. Positions 161 to 170 (SVNSNISRSN) are enriched in low complexity. Residues 171–184 (NGRKVRKRDRCTIL) show a composition bias toward basic residues.

This sequence belongs to the calmodulin family.

Calmodulin mediates the control of a large number of enzymes, ion channels and other proteins by Ca(2+). Among the enzymes to be stimulated by the calmodulin-Ca(2+) complex are a number of protein kinases and phosphatases. This Petunia hybrida (Petunia) protein is Calmodulin-related protein (CAM53).